A 3019-amino-acid chain; its full sequence is Genome polyprotein (3019 aa).

Position 2 is an N-acetylserine; by host (serine 2). The interval 2–23 is interaction with STAT1; it reads STLPKPQRITKRNINRRPQDVK. The segment at 2-58 is interaction with EIF2AK2/PKR; that stretch reads STLPKPQRITKRNINRRPQDVKFPGGGQIVGGVYVLPRRGPKLGVRAVRKTSERSQP. Residues 2–59 are interaction with DDX3X; sequence STLPKPQRITKRNINRRPQDVKFPGGGQIVGGVYVLPRRGPKLGVRAVRKTSERSQPR. Positions 2–75 are disordered; it reads STLPKPQRIT…PRARRTEGRS (74 aa). Residues 2 to 168 lie on the Cytoplasmic side of the membrane; the sequence is STLPKPQRIT…EDGINFATGN (167 aa). 2 short sequence motifs (nuclear localization signal) span residues 5-13 and 38-43; these read PKPQRITKR and PRRGPK. Serine 53 is modified (phosphoserine; by host). 2 consecutive short sequence motifs (nuclear localization signal) follow at residues 58 to 64 and 66 to 71; these read PRSRRQP and PRARRT. Residues 58–68 show a composition bias toward basic residues; sequence PRSRRQPIPRA. Residues serine 99 and serine 116 each carry the phosphoserine; by host modification. The important for endoplasmic reticulum and mitochondrial localization stretch occupies residues 112 to 152; sequence PRRRSRNLGKVIDTLTCGFADLMGYIPLVGAPVGGVARALA. The interaction with APOA2 stretch occupies residues 122–173; sequence VIDTLTCGFADLMGYIPLVGAPVGGVARALAHGVRALEDGINFATGNLPGCS. The interval 164-167 is important for lipid droplets localization; it reads FATG. The chain crosses the membrane as a helical span at residues 169–189; the sequence is LPGCSFSIFLLALLSCLLTPT. The propeptide at 178 to 191 is ER anchor for the core protein, removed in mature form by host signal peptidase; that stretch reads LLALLSCLLTPTAG. Topologically, residues 190–358 are lumenal; the sequence is AGLEYRNASG…IGAHWGVMAG (169 aa). N-linked (GlcNAc...) asparagine; by host glycosylation is found at asparagine 196, asparagine 209, and asparagine 234. The interval 265 to 296 is important for fusion; that stretch reads MVGAATLCSALYVGDLCGALFLVGQGFSWRHR. Asparagine 305 carries N-linked (GlcNAc...) asparagine; by host glycosylation. Residues 359–379 traverse the membrane as a helical segment; that stretch reads VAYYSMQGNWAKVFLVLCLFS. At 380–730 the chain is on the lumenal side; that stretch reads GVDASTTITG…WEFVILIFLL (351 aa). The tract at residues 385–412 is HVR1; the sequence is TTITGGVAASGAFTITSLFSTGAKQPLH. 3 N-linked (GlcNAc...) (high mannose) asparagine; by host glycosylation sites follow: asparagine 417, asparagine 423, and asparagine 430. Disulfide bonds link cysteine 429–cysteine 553, cysteine 452–cysteine 459, cysteine 487–cysteine 495, and cysteine 504–cysteine 509. A glycan (N-linked (GlcNAc...) asparagine; by host) is linked at asparagine 448. Residues 475–479 are HVR2; sequence ANISG. The N-linked (GlcNAc...) asparagine; by host glycan is linked to asparagine 476. Residues 481–494 form a CD81-binding 1 region; the sequence is SSEKPYCWHYAPRP. N-linked (GlcNAc...) asparagine; by host glycosylation is present at asparagine 533. The tract at residues 545-552 is CD81-binding 2; it reads PPTEPWFG. Asparagine 557 carries N-linked (GlcNAc...) asparagine; by host glycosylation. 4 disulfide bridges follow: cysteine 565/cysteine 570, cysteine 586/cysteine 590, cysteine 602/cysteine 625, and cysteine 612/cysteine 649. 2 N-linked (GlcNAc...) (high mannose) asparagine; by host glycosylation sites follow: asparagine 628 and asparagine 650. Cysteine 657 and cysteine 682 are disulfide-bonded. The PKR/eIF2-alpha phosphorylation homology domain (PePHD) stretch occupies residues 665 to 676; the sequence is SEMYPLLHSTTE. The helical transmembrane segment at 731 to 751 threads the bilayer; sequence LADARVCVVLWMMMLISQAEA. Topologically, residues 752–762 are lumenal; that stretch reads ALENLIVLNAI. Residues 763 to 783 form a helical membrane-spanning segment; sequence SAAGTHGIWWSLVAFCVAWHV. Over 784–786 the chain is Cytoplasmic; the sequence is RGR. A helical membrane pass occupies residues 787-808; the sequence is IFPIAVYSIVGLWPLLLLVLML. Residues 809 to 818 lie on the Lumenal side of the membrane; sequence PYRAYAWTGT. Residues 819 to 839 traverse the membrane as a helical segment; the sequence is DTSTLGAGVLSLFALFTLSPW. The Cytoplasmic portion of the chain corresponds to 840–843; that stretch reads YKHW. A helical transmembrane segment spans residues 844–863; that stretch reads IARLIWWNQYTIARCEAALQ. Topologically, residues 864–886 are lumenal; the sequence is IWVPPLLARGARDGIILLAGLFY. Residues 887–907 traverse the membrane as a helical segment; sequence PALVFDITKLLLAILGPLYIL. One can recognise a Peptidase C18 domain in the interval 908-1031; the sequence is QASLVRVPYF…DYRSMGWRLL (124 aa). The Cytoplasmic portion of the chain corresponds to 908 to 1662; sequence QASLVRVPYF…CMAADLEVAT (755 aa). The protease NS2-3 stretch occupies residues 909-1211; the sequence is ASLVRVPYFV…PVESLSAQTR (303 aa). Cysteine 927 carries the S-palmitoyl cysteine; by host lipid modification. The tract at residues 934–954 is interaction with host SCPS1; that stretch reads TGGKYVQMVLLALARGFNTYL. Catalysis depends on for protease NS2 activity; shared with dimeric partner residues histidine 957, glutamate 977, and cysteine 998. The region spanning 1032 to 1213 is the Peptidase S29 domain; sequence APITAHAQQT…ESLSAQTRSP (182 aa). Active-site charge relay system; for serine protease NS3 activity residues include histidine 1088 and aspartate 1112. Zn(2+) contacts are provided by cysteine 1128 and cysteine 1130. Serine 1170 (charge relay system; for serine protease NS3 activity) is an active-site residue. Residues cysteine 1176 and histidine 1180 each contribute to the Zn(2+) site. 1235-1242 is an ATP binding site; sequence APTGSGES. Residues serine 1242 and glutamate 1322 each contribute to the Mg(2+) site. A DECH box motif is present at residues 1321-1324; it reads DECH. The Helicase C-terminal domain occupies 1366–1543; it reads NIEEVALTGE…ELTPSETTVR (178 aa). Residues 1482–1505 form a disordered region; it reads VPQDAVSRSQRRGRTGRGKSGTYR. The segment at 1491–1503 is RNA-binding; sequence QRRGRTGRGKSGT. The helical transmembrane segment at 1663-1683 threads the bilayer; that stretch reads SAWVLLGGVMAALTAYCLSVG. The interval 1684 to 1695 is NS3-binding; that stretch reads SVVIVGHLVLGG. Over 1684–1810 the chain is Cytoplasmic; the sequence is SVVIVGHLVL…SVTSPLTTNQ (127 aa). The chain crosses the membrane as a helical span at residues 1811–1829; the sequence is TLLFNIMGGWVASNLAPPP. Over 1830–1833 the chain is Lumenal; it reads ASTA. The chain crosses the membrane as a helical span at residues 1834-1854; it reads FVVSGLAGAAVGSIGLGKVLL. Aspartate 1855 is a topological domain (cytoplasmic). A helical membrane pass occupies residues 1856–1876; that stretch reads ILAGYGAGVAGALVAFKIMGG. The Lumenal segment spans residues 1877–1886; sequence EMPSTEDMVN. The helical transmembrane segment at 1887 to 1907 threads the bilayer; that stretch reads LLPAILSPGALVVGVICAAIL. Residues 1908–1977 lie on the Cytoplasmic side of the membrane; it reads RRHVGPGEGA…WINEDYPTPC (70 aa). A lipid anchor (S-palmitoyl cysteine; by host) is attached at cysteine 1977. An intramembrane segment occupies 1978–2007; the sequence is DGNWLYDIWNWVCTVLADFKLWLGAKILPK. The Cytoplasmic segment spans residues 2008 to 2998; the sequence is MPGIPFLSCQ…YHSVSRARSR (991 aa). Zn(2+) is bound by residues cysteine 2016, cysteine 2034, cysteine 2036, and cysteine 2057. An FKBP8-binding region spans residues 2125-2213; that stretch reads EFFTELDGVR…ASSSASQLSA (89 aa). Residues 2125–2337 are transcriptional activation; sequence EFFTELDGVR…PVPPPRRKRT (213 aa). An interaction with non-structural protein 4A region spans residues 2140 to 2144; the sequence is PVCRP. Positions 2191–2225 are disordered; that stretch reads AKRRLDRGSPPSLASSSASQLSAPSRKATCTTHGR. The segment at 2194–2446 is interaction with host SKP2; it reads RLDRGSPPSL…ALITPCAAEE (253 aa). Serine 2199, serine 2202, serine 2206, serine 2209, serine 2212, and serine 2215 each carry phosphoserine; by host. The segment covering 2199-2215 has biased composition (low complexity); the sequence is SPPSLASSSASQLSAPS. The segment at 2215-2254 is ISDR; it reads SRKATCTTHGRHPDAELITANLLWRQEMGSNITRVESESK. The interaction with EIF2AK2/PKR stretch occupies residues 2215–2280; sequence SRKATCTTHG…DELSVAAECF (66 aa). An NS4B-binding region spans residues 2254–2311; that stretch reads KVVILDSFEPLRACDDEDELSVAAECFKKPPKYPPALPIWARPDYNPPLVEPWKDPDY. The interval 2304-2382 is V3; that stretch reads EPWKDPDYVP…GTQSGSLTGP (79 aa). The SH3-binding signature appears at 2327–2330; sequence PPVP. A Nuclear localization signal motif is present at residues 2332 to 2340; the sequence is PRRKRTIVL. Lysine 2355 is covalently cross-linked (Glycyl lysine isopeptide (Lys-Gly) (interchain with G-Cter in ubiquitin)). The segment at 2356-2417 is disordered; that stretch reads SFPQPTCSAE…PDLSSGSWST (62 aa). The segment covering 2369-2381 has biased composition (polar residues); that stretch reads TSGVGTQSGSLTG. Serine 2457 and serine 2470 each carry phosphoserine; by host. Residues 2642–2760 enclose the RdRp catalytic domain; sequence PLGFSYDTRC…IAESAGIDED (119 aa). The Mg(2+) site is built by aspartate 2648, aspartate 2746, and aspartate 2747. Residues 2999-3019 traverse the membrane as a helical segment; sequence HLLLGLLLLTVGVGIFLLPAR.

This sequence belongs to the hepacivirus polyprotein family. In terms of assembly, homooligomer. Interacts with E1 (via C-terminus). Interacts with the non-structural protein 5A. Interacts (via N-terminus) with host STAT1 (via SH2 domain); this interaction results in decreased STAT1 phosphorylation and ubiquitin-mediated proteasome-dependent STAT1 degradation, leading to decreased IFN-stimulated gene transcription. Interacts with host STAT3; this interaction constitutively activates STAT3. Interacts with host LTBR receptor. Interacts with host TNFRSF1A receptor and possibly induces apoptosis. Interacts with host HNRPK. Interacts with host YWHAE. Interacts with host UBE3A/E6AP. Interacts with host DDX3X. Interacts with host APOA2. Interacts with host RXRA protein. Interacts with host SP110 isoform 3/Sp110b; this interaction sequesters the transcriptional corepressor SP110 away from the nucleus. Interacts with host CREB3 nuclear transcription protein; this interaction triggers cell transformation. Interacts with host ACY3. Interacts with host C1QR1. Interacts with host RBM24; this interaction, which enhances the interaction of the mature core protein with 5'-UTR, may inhibit viral translation and favor replication. Interacts with host EIF2AK2/PKR; this interaction induces the autophosphorylation of EIF2AK2. Part of the viral assembly initiation complex composed of NS2, E1, E2, NS3, NS4A, NS5A and the mature core protein. As to quaternary structure, forms a heterodimer with envelope glycoprotein E2. Interacts with mature core protein. Interacts with protease NS2. The heterodimer E1/E2 interacts with host CLDN1; this interaction plays a role in viral entry into host cell. Interacts with host SPSB2 (via C-terminus). Part of the viral assembly initiation complex composed of NS2, E1, E2, NS3, NS4A, NS5A and the mature core protein. Interacts with host NEURL3; this interaction prevents E1 binding to glycoprotein E2. Forms a heterodimer with envelope glycoprotein E1. Interacts with host CD81 and SCARB1 receptors; these interactions play a role in viral entry into host cell. Interacts with host EIF2AK2/PKR; this interaction inhibits EIF2AK2 and probably allows the virus to evade the innate immune response. Interacts with host CD209/DC-SIGN and CLEC4M/DC-SIGNR. Interact with host SPCS1; this interaction is essential for viral particle assembly. Interacts with protease NS2. The heterodimer E1/E2 interacts with host CLDN1; this interaction plays a role in viral entry into host cell. Part of the viral assembly initiation complex composed of NS2, E1, E2, NS3, NS4A, NS5A and the mature core protein. Interacts with host SLC3A2/4F2hc; the interaction may facilitate viral entry into host cell. Interacts with human PLSCR1. In terms of assembly, homohexamer. Homoheptamer. Interacts with protease NS2. As to quaternary structure, homodimer. Interacts with host SPCS1; this interaction is essential for viral particle assembly. Interacts with envelope glycoprotein E1. Interacts with envelope glycoprotein E2. Interacts with viroporin p7. Interacts with serine protease/helicase NS3. Part of the replication complex composed of NS2, NS3, NS4A, NS4B, NS5A and the RNA-directed RNA polymerase embedded in an ER-derived membranous web. Part of the viral assembly initiation complex composed of NS2, E1, E2, NS3, NS4A, NS5A and the mature core protein. Interacts with protease NS2. Interacts with non-structural protein 4A; this interaction stabilizes the folding of NS3 serine protease. NS3-NS4A interaction is essential for NS3 activation and allows membrane anchorage of the latter. NS3/NS4A complex also prevents phosphorylation of host IRF3, thus preventing the establishment of dsRNA induced antiviral state. Interacts with host MAVS; this interaction leads to the cleavage and inhibition of host MAVS. Interacts with host TICAM1; this interaction leads to the cleavage and inhibition of host TICAM1. Interacts with host TANK-binding kinase/TBK1; this interaction results in the inhibition of the association between TBK1 and IRF3, which leads to the inhibition of IRF3 activation. Interacts with host RBM24. Part of the replication complex composed of NS2, NS3, NS4A, NS4B, NS5A and the RNA-directed RNA polymerase embedded in an ER-derived membranous web. Part of the viral assembly initiation complex composed of NS2, E1, E2, NS3, NS4A, NS5A and the mature core protein. In terms of assembly, interacts with NS3 serine protease; this interaction stabilizes the folding of NS3 serine protease. NS3-NS4A interaction is essential for NS3 activation and allows membrane anchorage of the latter. Interacts with non-structural protein 5A (via N-terminus). Part of the replication complex composed of NS2, NS3, NS4A, NS4B, NS5A and the RNA-directed RNA polymerase embedded in an ER-derived membranous web. Part of the viral assembly initiation complex composed of NS2, E1, E2, NS3, NS4A, NS5A and the mature core protein. As to quaternary structure, homomultimer. Interacts with non-structural protein NS5A. Interacts with host PLA2G4C; this interaction likely initiates the recruitment of replication complexes to lipid droplets. Interacts with host STING; this interaction disrupts the interaction between STING and TBK1 thereby suppressing the interferon signaling. Part of the replication complex composed of NS2, NS3, NS4A, NS4B, NS5A and the RNA-directed RNA polymerase embedded in an ER-derived membranous web. Monomer. Homodimer; dimerization is required for RNA-binding. Interacts with the mature core protein. Interacts (via N-terminus) with non-structural protein 4A. Interacts with non-structural protein 4B. Interacts (via region D2) with RNA-directed RNA polymerase. Part of the viral assembly initiation complex composed of NS2, E1, E2, NS3, NS4A, NS5A and the mature core protein. Part of the replication complex composed of NS2, NS3, NS4A, NS4B, NS5A and the RNA-directed RNA polymerase embedded in an ER-derived membranous web. Interacts with host GRB2. Interacts with host BIN1. Interacts with host PIK3R1. Interacts with host SRCAP. Interacts with host FKBP8. Interacts (via C-terminus) with host VAPB (via MSP domain). Interacts with host EIF2AK2/PKR; this interaction leads to disruption of EIF2AK2 dimerization by NS5A and probably allows the virus to evade the innate immune response. Interacts (via N-terminus) with host PACSIN2 (via N-terminus); this interaction attenuates protein kinase C alpha-mediated phosphorylation of PACSIN2 by disrupting the interaction between PACSIN2 and PRKCA. Interacts (via N-terminus) with host SRC kinase (via SH2 domain). Interacts with most Src-family kinases. Interacts with host IFI27 and SKP2; promotes the ubiquitin-mediated proteasomal degradation of NS5A. Interacts with host GPS2. Interacts with host TNFRSF21; this interaction allows the modulation by the virus of JNK, p38 MAPK, STAT3, and Akt signaling pathways in a DR6-dependent manner. Interacts (via N-terminus) with host CIDEB (via N-terminus); this interaction seems to regulate the association of HCV particles with APOE. Interacts with host CHKA/Choline Kinase-alpha; CHKA bridges host PI4KA and NS5A and potentiates NS5A-stimulated PI4KA activity, which then facilitates the targeting of the ternary complex to the ER for viral replication. Interacts with host SPSB2 (via C-terminus); this interaction targets NS5A for ubiquitination and degradation. Interacts with host RAB18; this interaction may promote the association of NS5A and other replicase components with lipid droplets. Interacts (via region D2) with host PPIA/CYPA; the interaction stimulates RNA-binding ability of NS5A and is dependent on the peptidyl-prolyl cis-trans isomerase activity of PPIA/CYPA. Interacts with host TRIM14; this interaction induces the degradation of NS5A. In terms of assembly, homooligomer. Interacts with non-structural protein 5A. Interacts with host VAPB. Interacts with host PRK2/PKN2. Interacts with host HNRNPA1 and SEPT6; these interactions facilitate viral replication. Part of the replication complex composed of NS2, NS3, NS4A, NS4B, NS5A and the RNA-directed RNA polymerase. Zn(2+) is required as a cofactor. It depends on Mg(2+) as a cofactor. In terms of processing, specific enzymatic cleavages in vivo yield mature proteins. The structural proteins, core, E1, E2 and p7 are produced by proteolytic processing by host signal peptidases. The core protein precursor is synthesized as a 23 kDa, which is retained in the ER membrane through the hydrophobic signal peptide. Cleavage by the signal peptidase releases the 21 kDa mature core protein. The cleavage of the core protein precursor occurs between aminoacids 176 and 188 but the exact cleavage site is not known. Some degraded forms of the core protein appear as well during the course of infection. The other proteins (p7, NS2, NS3, NS4A, NS4B, NS5A and NS5B) are cleaved by the viral proteases. Autoprocessing between NS2 and NS3 is mediated by the NS2 cysteine protease catalytic domain and regulated by the NS3 N-terminal domain. Post-translationally, phosphorylated by host PKC and PKA. Ubiquitinated; mediated by UBE3A and leading to core protein subsequent proteasomal degradation. In terms of processing, highly N-glycosylated. Post-translationally, palmitoylation is required for NS2/3 autoprocessing and E2 recruitment to membranes. Palmitoylated. This modification may play a role in its polymerization or in protein-protein interactions. In terms of processing, phosphorylated on serines in a basal form termed p56. p58 is a hyperphosphorylated form of p56. p56 and p58 coexist in the cell in roughly equivalent amounts. Hyperphosphorylation is dependent on the presence of NS4A. Host CSNK1A1/CKI-alpha or RPS6KB1 kinases may be responsible for NS5A phosphorylation. Post-translationally, tyrosine phosphorylation is essential for the interaction with host SRC. Ubiquitinated. Ubiquitination, most probably at Lys-2355, mediated by host IFI27 and SKP2 leads to proteasomal degradation, restricting viral infection. Ubiquitination by host TRIM22 leads to interruption of viral replication. In terms of processing, the N-terminus is phosphorylated by host PRK2/PKN2.

It is found in the host endoplasmic reticulum membrane. The protein resides in the host mitochondrion membrane. Its subcellular location is the virion. The protein localises to the host cytoplasm. It localises to the host nucleus. It is found in the host lipid droplet. The protein resides in the virion membrane. Its subcellular location is the host mitochondrion. The protein localises to the host cell membrane. It localises to the host perinuclear region. It carries out the reaction Hydrolysis of four peptide bonds in the viral precursor polyprotein, commonly with Asp or Glu in the P6 position, Cys or Thr in P1 and Ser or Ala in P1'.. The enzyme catalyses a ribonucleoside 5'-triphosphate + H2O = a ribonucleoside 5'-diphosphate + phosphate + H(+). It catalyses the reaction ATP + H2O = ADP + phosphate + H(+). The catalysed reaction is RNA(n) + a ribonucleoside 5'-triphosphate = RNA(n+1) + diphosphate. Inhibited by the antiviral drug hexamethylene amiloride. Inhibition by amantadine appears to be genotype-dependent. Also inhibited by long-alkyl-chain iminosugar derivatives. Its activity is regulated as follows. Activity is up-regulated by PRK2/PKN2-mediated phosphorylation. In terms of biological role, packages viral RNA to form a viral nucleocapsid, and promotes virion budding. Participates in the viral particle production as a result of its interaction with the non-structural protein 5A. Binds RNA and may function as a RNA chaperone to induce the RNA structural rearrangements taking place during virus replication. Modulates viral translation initiation by interacting with viral IRES and 40S ribosomal subunit. Affects various cell signaling pathways, host immunity and lipid metabolism. Prevents the establishment of cellular antiviral state by blocking the interferon-alpha/beta (IFN-alpha/beta) and IFN-gamma signaling pathways and by blocking the formation of phosphorylated STAT1 and promoting ubiquitin-mediated proteasome-dependent degradation of STAT1. Activates STAT3 leading to cellular transformation. Regulates the activity of cellular genes, including c-myc and c-fos. May repress the promoter of p53, and sequester CREB3 and SP110 isoform 3/Sp110b in the cytoplasm. Represses cell cycle negative regulating factor CDKN1A, thereby interrupting an important check point of normal cell cycle regulation. Targets transcription factors involved in the regulation of inflammatory responses and in the immune response: suppresses TNF-induced NF-kappa-B activation, and activates AP-1. Binds to dendritic cells (DCs) via C1QR1, resulting in down-regulation of T-lymphocytes proliferation. Alters lipid metabolism by interacting with hepatocellular proteins involved in lipid accumulation and storage. Induces up-regulation of FAS promoter activity, and thereby contributes to the increased triglyceride accumulation in hepatocytes (steatosis). Functionally, forms a heterodimer with envelope glycoprotein E2, which mediates virus attachment to the host cell, virion internalization through clathrin-dependent endocytosis and fusion with host membrane. Fusion with the host cell is most likely mediated by both E1 and E2, through conformational rearrangements of the heterodimer required for fusion rather than a classical class II fusion mechanism. E1/E2 heterodimer binds host apolipoproteins such as APOB and ApoE thereby forming a lipo-viro-particle (LVP). APOE associated to the LVP allows the initial virus attachment to cell surface receptors such as the heparan sulfate proteoglycans (HSPGs), syndecan-1 (SDC1), syndecan-1 (SDC2), the low-density lipoprotein receptor (LDLR) and scavenger receptor class B type I (SCARB1). The cholesterol transfer activity of SCARB1 allows E2 exposure and binding of E2 to SCARB1 and the tetraspanin CD81. E1/E2 heterodimer binding on CD81 activates the epithelial growth factor receptor (EGFR) signaling pathway. Diffusion of the complex E1-E2-EGFR-SCARB1-CD81 to the cell lateral membrane allows further interaction with Claudin 1 (CLDN1) and occludin (OCLN) to finally trigger HCV entry. Forms a heterodimer with envelope glycoprotein E1, which mediates virus attachment to the host cell, virion internalization through clathrin-dependent endocytosis and fusion with host membrane. Fusion with the host cell is most likely mediated by both E1 and E2, through conformational rearrangements of the heterodimer required for fusion rather than a classical class II fusion mechanism. The interaction between envelope glycoprotein E2 and host apolipoprotein E/APOE allows the proper assembly, maturation and infectivity of the viral particles. This interaction is probably promoted via the up-regulation of cellular autophagy by the virus. E1/E2 heterodimer binds host apolipoproteins such as APOB and APOE thereby forming a lipo-viro-particle (LVP). APOE associated to the LVP allows the initial virus attachment to cell surface receptors such as the heparan sulfate proteoglycans (HSPGs), syndecan-1 (SDC1), syndecan-1 (SDC2), the low-density lipoprotein receptor (LDLR) and scavenger receptor class B type I (SCARB1). The cholesterol transfer activity of SCARB1 allows E2 exposure and binding of E2 to SCARB1 and the tetraspanin CD81. E1/E2 heterodimer binding on CD81 activates the epithelial growth factor receptor (EGFR) signaling pathway. Diffusion of the complex E1-E2-EGFR-SCARB1-CD81 to the cell lateral membrane allows further interaction with Claudin 1 (CLDN1) and occludin (OCLN) to finally trigger HCV entry. Inhibits host EIF2AK2/PKR activation, preventing the establishment of an antiviral state. Viral ligand for CD209/DC-SIGN and CLEC4M/DC-SIGNR, which are respectively found on dendritic cells (DCs), and on liver sinusoidal endothelial cells and macrophage-like cells of lymph node sinuses. These interactions allow the capture of circulating HCV particles by these cells and subsequent facilitated transmission to permissive cells such as hepatocytes and lymphocyte subpopulations. The interaction between E2 and host amino acid transporter complex formed by SLC3A2 and SLC7A5/LAT1 may facilitate viral entry into host cell. Its function is as follows. Ion channel protein that acts as a viroporin and plays an essential role in the assembly, envelopment and secretion of viral particles. Regulates the host cell secretory pathway, which induces the intracellular retention of viral glycoproteins and favors assembly of viral particles. Creates a pore in acidic organelles and releases Ca(2+) and H(+) in the cytoplasm of infected cells, leading to a productive viral infection. High levels of cytoplasmic Ca(2+) may trigger membrane trafficking and transport of viral ER-associated proteins to viroplasms, sites of viral genome replication. This ionic imbalance induces the assembly of the inflammasome complex, which triggers the maturation of pro-IL-1beta into IL-1beta through the action of caspase-1. Targets also host mitochondria and induces mitochondrial depolarization. In addition of its role as a viroporin, acts as a lipid raft adhesion factor. In terms of biological role, cysteine protease required for the proteolytic auto-cleavage between the non-structural proteins NS2 and NS3. The N-terminus of NS3 is required for the function of NS2 protease (active region NS2-3). Promotes the initiation of viral particle assembly by mediating the interaction between structural and non-structural proteins. Functionally, displays three enzymatic activities: serine protease with a chymotrypsin-like fold, NTPase and RNA helicase. NS3 serine protease, in association with NS4A, is responsible for the cleavages of NS3-NS4A, NS4A-NS4B, NS4B-NS5A and NS5A-NS5B. The NS3/NS4A complex prevents phosphorylation of host IRF3, thus preventing the establishment of dsRNA induced antiviral state. The NS3/NS4A complex induces host amino acid transporter component SLC3A2, thus contributing to HCV propagation. NS3 RNA helicase binds to RNA and unwinds both dsDNA and dsRNA in the 3' to 5' direction, and likely resolves RNA complicated stable secondary structures in the template strand. Binds a single ATP and catalyzes the unzipping of a single base pair of dsRNA. Inhibits host antiviral proteins TBK1 and IRF3 thereby preventing the establishment of an antiviral state. Cleaves host MAVS/CARDIF thereby preventing the establishment of an antiviral state. Cleaves host TICAM1/TRIF, thereby disrupting TLR3 signaling and preventing the establishment of an antiviral state. Induces a specific membrane alteration that serves as a scaffold for the virus replication complex. This membrane alteration gives rise to the so-called ER-derived membranous web that contains the replication complex. NS4B self-interaction contributes to its function in membranous web formation. Promotes host TRIF protein degradation in a CASP8-dependent manner thereby inhibiting host TLR3-mediated interferon signaling. Disrupts the interaction between STING and TBK1 contributing to the inhibition of interferon signaling. Its function is as follows. Phosphorylated protein that is indispensable for viral replication and assembly. Both hypo- and hyperphosphorylated states are required for the viral life cycle. The hyperphosphorylated form of NS5A is an inhibitor of viral replication. Involved in RNA-binding and especially in binding to the viral genome. Zinc is essential for RNA-binding. Participates in the viral particle production as a result of its interaction with the mature viral core protein. Its interaction with host VAPB may target the viral replication complex to vesicles. Down-regulates viral IRES translation initiation. Mediates interferon resistance, presumably by interacting with and inhibiting host EIF2AK2/PKR. Prevents BIN1-induced apoptosis. Acts as a transcriptional activator of some host genes important for viral replication when localized in the nucleus. Via the interaction with host PACSIN2, modulates lipid droplet formation in order to promote virion assembly. Modulates TNFRSF21/DR6 signaling pathway for viral propagation. In terms of biological role, RNA-dependent RNA polymerase that performs primer-template recognition and RNA synthesis during viral replication. Initiates RNA transcription/replication at a flavin adenine dinucleotide (FAD), resulting in a 5'- FAD cap on viral RNAs. In this way, recognition of viral 5' RNA by host pattern recognition receptors can be bypassed, thereby evading activation of antiviral pathways. The sequence is that of Genome polyprotein from Homo sapiens (Human).